Consider the following 404-residue polypeptide: Argininosuccinate synthase (404 aa).

ATP is bound by residues 10–18 (AFSGGLDTS) and Ala37. Residues Tyr88 and Ser93 each contribute to the L-citrulline site. Gly118 contacts ATP. Thr120, Asn124, and Asp125 together coordinate L-aspartate. Position 124 (Asn124) interacts with L-citrulline. The L-citrulline site is built by Arg128, Ser179, Ser188, Glu264, and Tyr276.

This sequence belongs to the argininosuccinate synthase family. Type 1 subfamily. In terms of assembly, homotetramer.

It is found in the cytoplasm. The enzyme catalyses L-citrulline + L-aspartate + ATP = 2-(N(omega)-L-arginino)succinate + AMP + diphosphate + H(+). Its pathway is amino-acid biosynthesis; L-arginine biosynthesis; L-arginine from L-ornithine and carbamoyl phosphate: step 2/3. This Nitrosomonas europaea (strain ATCC 19718 / CIP 103999 / KCTC 2705 / NBRC 14298) protein is Argininosuccinate synthase.